A 96-amino-acid chain; its full sequence is Essential MCU regulator, mitochondrial (96 aa).

Residues 1 to 34 (MIVSRLTFPLQAAKLVARKAAGNPSNSIIQRRHM) constitute a mitochondrion transit peptide. Residues 52–72 (PFGLFAIFCAVIPGLFIGATI) traverse the membrane as a helical segment.

The protein belongs to the SMDT1/EMRE family.

It is found in the mitochondrion inner membrane. Its function is as follows. Essential regulatory subunit of the mitochondrial calcium uniporter (mcu) channel, a protein that mediates calcium uptake into mitochondria. This chain is Essential MCU regulator, mitochondrial, found in Drosophila pseudoobscura pseudoobscura (Fruit fly).